Here is a 783-residue protein sequence, read N- to C-terminus: MAAPVAPGAVDQLAADLGNTSLGGGDNRAAPAINTNVAPGEYQTADPDTAGPTPSSAAPHPQSSASLYVGELDPSVTEAMLFELFSQIGSVASIRVCRDTITRRSLGYAYVNYNSTSDGEKALEELNYTLIKGRPCRIMWSQRDPALRKTGQGNVFIKNLDVAIDNKALHDTFAAFGNILSCKVAQDENGNSKGYGFVHYETDEAAAQAIKHVNNMLLNEKKVYVGYHIPKKDRQSKFEEMKANFTNIYVKNISLEATDEEFRDLFAKYGDVTSSSLARDSEGKSRGFGFVNFTTHECAAKAVEELNGKEFRGQDLYVGRAQKKHEREEELRKSYEAARLEKANKYQGVNLYIKNLADDIDDDKLRQMFSEYGPITSAKVMRDAVTEGSAEEETEGKDKENKKEGEQAAEAEGEAEGAEKKTEKKGDRRLGKSKGFGFVCFSNPDDATKAVAEMNQRMIEGKPLYVALAQRKDVRKNQLEASIQARNQLRMQQAAAQAGLPQQYMQTPVYYAPGQQPNFMPPGGRGMPFPQGGLGMPAVQGGRPGQFPPYAQQGGRGGMPPQQLPIYPLGQFPPGAYPQPNNPQFLAAIQQVQQQAAALGNGRGGPGGPGGRGMQGMPVPQGMPGGPGMAGFPPNGRPQNGNMGGRGGPGRGGNFAAGRGAPPAGPLAAGGELNASSLLQSQLTATNNPQQQKQILGENLFPKIQALQPDLAGKITGMLLEMDNAELVNLLEDEAALVAKVNEAMAVYDEYVKSQQGPGQGPAPTQGEAEAEKPKEEKAEEKA.

The disordered stretch occupies residues 16-65 (DLGNTSLGGGDNRAAPAINTNVAPGEYQTADPDTAGPTPSSAAPHPQSSA). A compositionally biased stretch (low complexity) spans 54–65 (PSSAAPHPQSSA). 4 consecutive RRM domains span residues 65-143 (ASLY…WSQR), 153-230 (GNVF…YHIP), 246-323 (TNIY…RAQK), and 349-471 (VNLY…LAQR). 3 disordered regions span residues 381-428 (MRDA…KGDR), 596-671 (AAAL…AAGG), and 752-783 (VKSQ…EEKA). A compositionally biased stretch (basic and acidic residues) spans 396–406 (GKDKENKKEGE). A compositionally biased stretch (acidic residues) spans 407–416 (QAAEAEGEAE). The segment covering 417–428 (GAEKKTEKKGDR) has biased composition (basic and acidic residues). A compositionally biased stretch (gly residues) spans 601–614 (NGRGGPGGPGGRGM). Low complexity predominate over residues 630 to 641 (AGFPPNGRPQNG). The span at 642–655 (NMGGRGGPGRGGNF) shows a compositional bias: gly residues. The span at 656-671 (AAGRGAPPAGPLAAGG) shows a compositional bias: low complexity. The PABC domain maps to 676 to 753 (SSLLQSQLTA…AMAVYDEYVK (78 aa)). Residues 770 to 783 (EAEKPKEEKAEEKA) are compositionally biased toward basic and acidic residues.

The protein belongs to the polyadenylate-binding protein type-1 family.

It is found in the cytoplasm. The protein resides in the nucleus. Functionally, binds the poly(A) tail of mRNA. Appears to be an important mediator of the multiple roles of the poly(A) tail in mRNA biogenesis, stability and translation. In the nucleus, involved in both mRNA cleavage and polyadenylation. Is also required for efficient mRNA export to the cytoplasm. Acts in concert with a poly(A)-specific nuclease (PAN) to affect poly(A) tail shortening, which may occur concomitantly with either nucleocytoplasmic mRNA transport or translational initiation. In the cytoplasm, stimulates translation initiation and regulates mRNA decay through translation termination-coupled poly(A) shortening, probably mediated by PAN. In Chaetomium globosum (strain ATCC 6205 / CBS 148.51 / DSM 1962 / NBRC 6347 / NRRL 1970) (Soil fungus), this protein is Polyadenylate-binding protein, cytoplasmic and nuclear (PAB1).